The chain runs to 91 residues: Large ribosomal subunit protein uL23 (91 aa).

It belongs to the universal ribosomal protein uL23 family. As to quaternary structure, part of the 50S ribosomal subunit. Contacts protein L29, and trigger factor when it is bound to the ribosome.

One of the early assembly proteins it binds 23S rRNA. One of the proteins that surrounds the polypeptide exit tunnel on the outside of the ribosome. Forms the main docking site for trigger factor binding to the ribosome. This chain is Large ribosomal subunit protein uL23, found in Macrococcus caseolyticus (strain JCSC5402) (Macrococcoides caseolyticum).